Reading from the N-terminus, the 296-residue chain is MIQDSMQFAAVESGLRFYQAYDQSLSLWPIESEAFYVSTRFGKTHIIASGPKDAPSLILLHGGLFSSAMWYPNIAAWSSQFRTYAVDIIGDKNKSIPSAAMETRADFAEWMKDVFDSLGLETAHLAGLSLGGSHIVNFLLRAPERVERAVVISPAEAFISFHPDVYKYAAELTGARGAESYIKWITGDSYDLHPLLQRQIVAGVEWQDEQRSLKPTENGFPYVFTDQELKSIQVPVLLMFGEHEAMYHQQMAFERASVLVPGIQAEIVKNAGHLLSLEQPEYVNQRVLSFLCGGIK.

Residues serine 129, glutamate 244, and histidine 273 each act as charge relay system in the active site.

Belongs to the AB hydrolase superfamily.

It localises to the cytoplasm. It carries out the reaction a carboxylic ester + H2O = an alcohol + a carboxylate + H(+). Shows carboxylesterase activity in vitro. This Bacillus subtilis (strain 168) protein is Carboxylesterase YbfK (ybfK).